A 161-amino-acid polypeptide reads, in one-letter code: Lipoprotein signal peptidase (161 aa).

2 helical membrane-spanning segments follow: residues 64–84 and 92–114; these read YRVPFFIITTSVAVVFLAWFY and VLGRCAVSLVLGGAIGNLIDRVR. Catalysis depends on residues Asp120 and Asp138. A helical membrane pass occupies residues 131–151; sequence WPAFNVADSAICVGVGMLLLA.

It belongs to the peptidase A8 family.

The protein resides in the cell inner membrane. The enzyme catalyses Release of signal peptides from bacterial membrane prolipoproteins. Hydrolyzes -Xaa-Yaa-Zaa-|-(S,diacylglyceryl)Cys-, in which Xaa is hydrophobic (preferably Leu), and Yaa (Ala or Ser) and Zaa (Gly or Ala) have small, neutral side chains.. It participates in protein modification; lipoprotein biosynthesis (signal peptide cleavage). This protein specifically catalyzes the removal of signal peptides from prolipoproteins. The chain is Lipoprotein signal peptidase from Syntrophotalea carbinolica (strain DSM 2380 / NBRC 103641 / GraBd1) (Pelobacter carbinolicus).